The following is a 127-amino-acid chain: MPQGLALYCFIAAGGATGACLRYFVTTSVDSLFGKHMPFGTLTVNVVGSFALALLYGVIERYDLSDSPYRALIGVGLLGAFTTFSTFSVETLTLLENELWLKAAANVFLNVGACLLAGWLAIELMKG.

4 consecutive transmembrane segments (helical) span residues 1 to 21 (MPQGLALYCFIAAGGATGACL), 39 to 59 (FGTLTVNVVGSFALALLYGVI), 72 to 92 (LIGVGLLGAFTTFSTFSVETL), and 105 to 125 (ANVFLNVGACLLAGWLAIELM). Na(+) contacts are provided by G79 and T82.

Belongs to the fluoride channel Fluc/FEX (TC 1.A.43) family.

The protein resides in the cell inner membrane. It catalyses the reaction fluoride(in) = fluoride(out). Na(+) is not transported, but it plays an essential structural role and its presence is essential for fluoride channel function. In terms of biological role, fluoride-specific ion channel. Important for reducing fluoride concentration in the cell, thus reducing its toxicity. The chain is Fluoride-specific ion channel FluC from Alteromonas mediterranea (strain DSM 17117 / CIP 110805 / LMG 28347 / Deep ecotype).